The sequence spans 625 residues: tRNA uridine 5-carboxymethylaminomethyl modification enzyme MnmG (625 aa).

11-16 is a binding site for FAD; sequence GAGHAG. 271-285 serves as a coordination point for NAD(+); that stretch reads GPRYCPSIETKIVTF.

Belongs to the MnmG family. In terms of assembly, homodimer. Heterotetramer of two MnmE and two MnmG subunits. The cofactor is FAD.

It localises to the cytoplasm. In terms of biological role, NAD-binding protein involved in the addition of a carboxymethylaminomethyl (cmnm) group at the wobble position (U34) of certain tRNAs, forming tRNA-cmnm(5)s(2)U34. This chain is tRNA uridine 5-carboxymethylaminomethyl modification enzyme MnmG, found in Parabacteroides distasonis (strain ATCC 8503 / DSM 20701 / CIP 104284 / JCM 5825 / NCTC 11152).